The following is a 651-amino-acid chain: Receptor-like serine/threonine-protein kinase At4g25390 (651 aa).

A signal peptide spans 1 to 25; it reads MPSRSISAPVPVLAPAPIVSSLVPA. Topologically, residues 26 to 40 are extracellular; that stretch reads APSGHQNKTTRIFPP. An N-linked (GlcNAc...) asparagine glycan is attached at Asn32. The helical transmembrane segment at 41–61 threads the bilayer; that stretch reads FVVAGAGAGFSLFITLSVCFC. The Cytoplasmic portion of the chain corresponds to 62–651; the sequence is KFSRKRSSPP…PLKTTRKQRR (590 aa). Residues 66–87 form a disordered region; that stretch reads KRSSPPAENASSSPRRPSPREF. A compositionally biased stretch (low complexity) spans 69–87; it reads SPPAENASSSPRRPSPREF. One can recognise a Protein kinase domain in the interval 99 to 633; sequence FSQANRLGQG…LKGEVNLPEL (535 aa). Residues 105 to 113 and Lys127 each bind ATP; that span reads LGQGGFGVV. Asp225 functions as the Proton acceptor in the catalytic mechanism.

It belongs to the protein kinase superfamily. Ser/Thr protein kinase family.

Its subcellular location is the cell membrane. The enzyme catalyses L-seryl-[protein] + ATP = O-phospho-L-seryl-[protein] + ADP + H(+). The catalysed reaction is L-threonyl-[protein] + ATP = O-phospho-L-threonyl-[protein] + ADP + H(+). The chain is Receptor-like serine/threonine-protein kinase At4g25390 from Arabidopsis thaliana (Mouse-ear cress).